A 262-amino-acid polypeptide reads, in one-letter code: Acyl-[acyl-carrier-protein]--UDP-N-acetylglucosamine O-acyltransferase (262 aa).

This sequence belongs to the transferase hexapeptide repeat family. LpxA subfamily. Homotrimer.

It is found in the cytoplasm. The enzyme catalyses a (3R)-hydroxyacyl-[ACP] + UDP-N-acetyl-alpha-D-glucosamine = a UDP-3-O-[(3R)-3-hydroxyacyl]-N-acetyl-alpha-D-glucosamine + holo-[ACP]. Its pathway is glycolipid biosynthesis; lipid IV(A) biosynthesis; lipid IV(A) from (3R)-3-hydroxytetradecanoyl-[acyl-carrier-protein] and UDP-N-acetyl-alpha-D-glucosamine: step 1/6. In terms of biological role, involved in the biosynthesis of lipid A, a phosphorylated glycolipid that anchors the lipopolysaccharide to the outer membrane of the cell. This is Acyl-[acyl-carrier-protein]--UDP-N-acetylglucosamine O-acyltransferase from Campylobacter curvus (strain 525.92).